Consider the following 37-residue polypeptide: Large ribosomal subunit protein bL36c (37 aa).

Belongs to the bacterial ribosomal protein bL36 family.

The protein localises to the plastid. It is found in the chloroplast. The protein is Large ribosomal subunit protein bL36c of Coffea arabica (Arabian coffee).